Reading from the N-terminus, the 417-residue chain is NADH-quinone oxidoreductase subunit D (417 aa).

The protein belongs to the complex I 49 kDa subunit family. As to quaternary structure, NDH-1 is composed of 14 different subunits. Subunits NuoB, C, D, E, F, and G constitute the peripheral sector of the complex.

It localises to the cell inner membrane. It catalyses the reaction a quinone + NADH + 5 H(+)(in) = a quinol + NAD(+) + 4 H(+)(out). NDH-1 shuttles electrons from NADH, via FMN and iron-sulfur (Fe-S) centers, to quinones in the respiratory chain. The immediate electron acceptor for the enzyme in this species is believed to be ubiquinone. Couples the redox reaction to proton translocation (for every two electrons transferred, four hydrogen ions are translocated across the cytoplasmic membrane), and thus conserves the redox energy in a proton gradient. The protein is NADH-quinone oxidoreductase subunit D of Legionella pneumophila subsp. pneumophila (strain Philadelphia 1 / ATCC 33152 / DSM 7513).